The sequence spans 275 residues: Ribosomal RNA small subunit methyltransferase A (275 aa).

The S-adenosyl-L-methionine site is built by Asn-19, Leu-21, Gly-46, Glu-71, Asp-94, and Asn-117.

Belongs to the class I-like SAM-binding methyltransferase superfamily. rRNA adenine N(6)-methyltransferase family. RsmA subfamily.

It localises to the cytoplasm. It catalyses the reaction adenosine(1518)/adenosine(1519) in 16S rRNA + 4 S-adenosyl-L-methionine = N(6)-dimethyladenosine(1518)/N(6)-dimethyladenosine(1519) in 16S rRNA + 4 S-adenosyl-L-homocysteine + 4 H(+). In terms of biological role, specifically dimethylates two adjacent adenosines (A1518 and A1519) in the loop of a conserved hairpin near the 3'-end of 16S rRNA in the 30S particle. May play a critical role in biogenesis of 30S subunits. The protein is Ribosomal RNA small subunit methyltransferase A of Burkholderia pseudomallei (strain 668).